A 201-amino-acid polypeptide reads, in one-letter code: MDLISVILISIGLSMDAFAVSITNGAMISKVTASEGIRIGLFFGGFQALMPLIGWSIGIKFESYIAALDHWIALILLSIIGGKMIYDSVKENQDHKDEIACDYAVGEKKCLNNKTLILLAIATSIDALAVGVSFAFLKVSIINTIVIIGSITFVICFIGVMIGKKCGKLLKKRAEILGGVVLILIGVKIFIQHTNILSYIF.

The next 6 membrane-spanning stretches (helical) occupy residues 3–23 (LISVILISIGLSMDAFAVSIT), 39–59 (IGLFFGGFQALMPLIGWSIGI), 65–85 (IAALDHWIALILLSIIGGKMI), 116–136 (LILLAIATSIDALAVGVSFAF), 141–161 (IINTIVIIGSITFVICFIGVM), and 176–196 (ILGGVVLILIGVKIFIQHTNI).

It belongs to the MntP (TC 9.B.29) family.

The protein resides in the cell membrane. In terms of biological role, probably functions as a manganese efflux pump. The polypeptide is Putative manganese efflux pump MntP 2 (Clostridium botulinum (strain Langeland / NCTC 10281 / Type F)).